A 193-amino-acid polypeptide reads, in one-letter code: Ribonuclease HII (193 aa).

The 179-residue stretch at 15 to 193 (YIVAGIDEAG…PYHRKSFKCC (179 aa)) folds into the RNase H type-2 domain. A divalent metal cation-binding residues include aspartate 21, glutamate 22, and aspartate 112.

This sequence belongs to the RNase HII family. Mn(2+) is required as a cofactor. Requires Mg(2+) as cofactor.

The protein localises to the cytoplasm. It carries out the reaction Endonucleolytic cleavage to 5'-phosphomonoester.. Endonuclease that specifically degrades the RNA of RNA-DNA hybrids. The chain is Ribonuclease HII from Rickettsia akari (strain Hartford).